A 252-amino-acid chain; its full sequence is 5-oxoprolinase subunit A (252 aa).

This sequence belongs to the LamB/PxpA family. As to quaternary structure, forms a complex composed of PxpA, PxpB and PxpC.

The catalysed reaction is 5-oxo-L-proline + ATP + 2 H2O = L-glutamate + ADP + phosphate + H(+). Functionally, catalyzes the cleavage of 5-oxoproline to form L-glutamate coupled to the hydrolysis of ATP to ADP and inorganic phosphate. This chain is 5-oxoprolinase subunit A, found in Mycobacterium leprae (strain Br4923).